The following is a 548-amino-acid chain: Chaperonin GroEL (548 aa).

ATP contacts are provided by residues 29 to 32 (THGP), Lys50, 86 to 90 (DGTTT), Gly414, and Asp493.

It belongs to the chaperonin (HSP60) family. Forms a cylinder of 14 subunits composed of two heptameric rings stacked back-to-back. Interacts with the co-chaperonin GroES.

Its subcellular location is the cytoplasm. It catalyses the reaction ATP + H2O + a folded polypeptide = ADP + phosphate + an unfolded polypeptide.. Functionally, together with its co-chaperonin GroES, plays an essential role in assisting protein folding. The GroEL-GroES system forms a nano-cage that allows encapsulation of the non-native substrate proteins and provides a physical environment optimized to promote and accelerate protein folding. The sequence is that of Chaperonin GroEL from Desulfatibacillum aliphaticivorans.